Reading from the N-terminus, the 180-residue chain is Large ribosomal subunit protein uL18m (180 aa).

The protein belongs to the universal ribosomal protein uL18 family. As to quaternary structure, component of the mitochondrial large ribosomal subunit (mt-LSU). Mature mammalian 55S mitochondrial ribosomes consist of a small (28S) and a large (39S) subunit. The 28S small subunit contains a 12S ribosomal RNA (12S mt-rRNA) and 30 different proteins. The 39S large subunit contains a 16S rRNA (16S mt-rRNA), a copy of mitochondrial valine transfer RNA (mt-tRNA(Val)), which plays an integral structural role, and 52 different proteins.

Its subcellular location is the mitochondrion. Together with thiosulfate sulfurtransferase (TST), acts as a mitochondrial import factor for the cytosolic 5S rRNA. The precursor form shows RNA chaperone activity; is able to fold the 5S rRNA into an import-competent conformation that is recognized by rhodanese (TST). Both the cytoplasmic and mitochondrial forms are able to bind to the helix IV-loop D in the gamma domain of the 5S rRNA. The protein is Large ribosomal subunit protein uL18m (MRPL18) of Homo sapiens (Human).